The sequence spans 175 residues: Electron transport protein HydN (175 aa).

4 consecutive 4Fe-4S ferredoxin-type domains span residues 2-32, 48-79, 80-109, and 124-157; these read NRFI…NQDC, KGVN…SRDK, GFVH…VVVR, and DKAE…CVDR. [4Fe-4S] cluster-binding residues include cysteine 12, cysteine 15, cysteine 18, cysteine 22, cysteine 58, cysteine 61, cysteine 66, cysteine 70, cysteine 89, cysteine 92, cysteine 95, cysteine 99, cysteine 131, cysteine 134, cysteine 143, and cysteine 147.

It depends on [4Fe-4S] cluster as a cofactor.

Functionally, electron transport from formate to hydrogen. The sequence is that of Electron transport protein HydN (hydN) from Escherichia coli O157:H7.